We begin with the raw amino-acid sequence, 88 residues long: HssA/B-like protein 19 (88 aa).

The protein belongs to the hssA/B family.

This is HssA/B-like protein 19 (hssl19) from Dictyostelium discoideum (Social amoeba).